The primary structure comprises 225 residues: PKHD-type hydroxylase YbiX (225 aa).

The 100-residue stretch at 78 to 177 folds into the Fe2OG dioxygenase domain; sequence TLSTPLFNRY…RVASFMWIQS (100 aa). 3 residues coordinate Fe cation: His96, Asp98, and His158. Arg168 contributes to the 2-oxoglutarate binding site.

Requires Fe(2+) as cofactor. The cofactor is L-ascorbate.

This Escherichia fergusonii (strain ATCC 35469 / DSM 13698 / CCUG 18766 / IAM 14443 / JCM 21226 / LMG 7866 / NBRC 102419 / NCTC 12128 / CDC 0568-73) protein is PKHD-type hydroxylase YbiX.